A 375-amino-acid polypeptide reads, in one-letter code: 23S rRNA (uracil(747)-C(5))-methyltransferase RlmC (375 aa).

4 residues coordinate [4Fe-4S] cluster: Cys3, Cys11, Cys14, and Cys87. S-adenosyl-L-methionine contacts are provided by Gln212, Phe241, Glu262, and Asn307. Residue Cys334 is the Nucleophile of the active site.

This sequence belongs to the class I-like SAM-binding methyltransferase superfamily. RNA M5U methyltransferase family. RlmC subfamily.

The catalysed reaction is uridine(747) in 23S rRNA + S-adenosyl-L-methionine = 5-methyluridine(747) in 23S rRNA + S-adenosyl-L-homocysteine + H(+). Functionally, catalyzes the formation of 5-methyl-uridine at position 747 (m5U747) in 23S rRNA. This Escherichia coli O6:H1 (strain CFT073 / ATCC 700928 / UPEC) protein is 23S rRNA (uracil(747)-C(5))-methyltransferase RlmC.